We begin with the raw amino-acid sequence, 566 residues long: Glucose-6-phosphate isomerase, cytosolic (566 aa).

The active-site Proton donor is glutamate 360. Active-site residues include histidine 391 and lysine 516.

This sequence belongs to the GPI family. As to quaternary structure, homodimer.

The protein localises to the cytoplasm. It carries out the reaction alpha-D-glucose 6-phosphate = beta-D-fructose 6-phosphate. It participates in carbohydrate degradation; glycolysis; D-glyceraldehyde 3-phosphate and glycerone phosphate from D-glucose: step 2/4. This chain is Glucose-6-phosphate isomerase, cytosolic (PGIC), found in Spinacia oleracea (Spinach).